The sequence spans 254 residues: K88 minor fimbrial subunit FaeI (254 aa).

The N-terminal stretch at 1–20 (MKKVTLFLFVVSLLPSTVLA) is a signal peptide.

Belongs to the fimbrial K88 protein family.

It is found in the fimbrium. Its function is as follows. K88 minor fimbrial subunit, plays an essential role in the biogenesis of the K88 fimbriae. Fimbriae (also called pili), are polar filaments radiating from the surface of the bacterium to a length of 0.5-1.5 micrometers and numbering 100-300 per cell. They enable bacteria to colonize the epithelium of specific host organs. This chain is K88 minor fimbrial subunit FaeI (faeI), found in Escherichia coli.